The following is a 324-amino-acid chain: Cytochrome c biogenesis protein CcsA (324 aa).

8 consecutive transmembrane segments (helical) span residues 17 to 37 (IISVVIIIQLMTFFVHEIPAL), 44 to 64 (GMIATFLSITGLLIIRWIYSG), 68 to 88 (LSNLYESLMFLSWSFAIIHMI), 99 to 119 (YLSAITIPSAIFTQAFATSGL), 145 to 165 (MLLSYAALLVGSLFSIALLVI), 230 to 250 (VISIGFSFLTIGILSGAVWAN), 264 to 278 (TWAFITWTIYAIYSH), and 291 to 311 (AIVASIGFFIIWICYFGVNLL).

It belongs to the CcmF/CycK/Ccl1/NrfE/CcsA family. In terms of assembly, may interact with Ccs1.

It is found in the plastid. Its subcellular location is the chloroplast thylakoid membrane. Required during biogenesis of c-type cytochromes (cytochrome c6 and cytochrome f) at the step of heme attachment. The chain is Cytochrome c biogenesis protein CcsA from Lemna minor (Common duckweed).